The sequence spans 230 residues: Translation initiation factor IF-3 (230 aa).

2 disordered regions span residues 1 to 21 (MAIQ…RTNR) and 184 to 230 (LQSQ…AAQR). Positions 193–208 (AAAAAAPAAAPAAGAP) are enriched in low complexity. Pro residues predominate over residues 209–220 (APAPAPAAPAPA). Over residues 221 to 230 (PTAADPAAQR) the composition is skewed to low complexity.

It belongs to the IF-3 family. In terms of assembly, monomer.

Its subcellular location is the cytoplasm. IF-3 binds to the 30S ribosomal subunit and shifts the equilibrium between 70S ribosomes and their 50S and 30S subunits in favor of the free subunits, thus enhancing the availability of 30S subunits on which protein synthesis initiation begins. This chain is Translation initiation factor IF-3, found in Anaeromyxobacter dehalogenans (strain 2CP-1 / ATCC BAA-258).